The primary structure comprises 951 residues: Bifunctional glutamine synthetase adenylyltransferase/adenylyl-removing enzyme (951 aa).

Residues 1-440 (MLPLPSELQI…VFDDLIGDET (440 aa)) form an adenylyl removase region. Residues 449-951 (HGLYKSLWQD…WLAANDANVS (503 aa)) form an adenylyl transferase region.

This sequence belongs to the GlnE family. It depends on Mg(2+) as a cofactor.

The enzyme catalyses [glutamine synthetase]-O(4)-(5'-adenylyl)-L-tyrosine + phosphate = [glutamine synthetase]-L-tyrosine + ADP. The catalysed reaction is [glutamine synthetase]-L-tyrosine + ATP = [glutamine synthetase]-O(4)-(5'-adenylyl)-L-tyrosine + diphosphate. Functionally, involved in the regulation of glutamine synthetase GlnA, a key enzyme in the process to assimilate ammonia. When cellular nitrogen levels are high, the C-terminal adenylyl transferase (AT) inactivates GlnA by covalent transfer of an adenylyl group from ATP to specific tyrosine residue of GlnA, thus reducing its activity. Conversely, when nitrogen levels are low, the N-terminal adenylyl removase (AR) activates GlnA by removing the adenylyl group by phosphorolysis, increasing its activity. The regulatory region of GlnE binds the signal transduction protein PII (GlnB) which indicates the nitrogen status of the cell. In Yersinia pseudotuberculosis serotype O:1b (strain IP 31758), this protein is Bifunctional glutamine synthetase adenylyltransferase/adenylyl-removing enzyme.